The primary structure comprises 574 residues: K(+)/H(+) antiporter NhaP2 (574 aa).

The next 13 helical transmembrane spans lie at 6-26 (INSF…LSPV), 34-54 (ILLI…GGIL), 58-78 (YSTA…DGGM), 87-107 (VALW…TSIT), 109-129 (VMAA…GAIV), 173-193 (IAIL…ISFI), 196-216 (FGLG…LVNL), 219-239 (LAEG…YAAS), 242-262 (LGGS…NKPT), 271-291 (VLDG…GLLL), 299-319 (IWLP…PLAV), 335-355 (WFIS…VFPM), and 359-379 (LPGA…SLLV). One can recognise an RCK C-terminal domain in the interval 405 to 486 (SGVEIYPSSE…LEALSNLFSQ (82 aa)).

It belongs to the monovalent cation:proton antiporter 1 (CPA1) transporter (TC 2.A.36) family. NhaP2 subfamily.

The protein resides in the cell inner membrane. The enzyme catalyses K(+)(in) + H(+)(out) = K(+)(out) + H(+)(in). Functionally, k(+)/H(+) antiporter that extrudes potassium in exchange for external protons and maintains the internal concentration of potassium under toxic levels. The sequence is that of K(+)/H(+) antiporter NhaP2 from Shewanella sp. (strain ANA-3).